The sequence spans 275 residues: AA9 family lytic polysaccharide monooxygenase D (275 aa).

The N-terminal stretch at 1 to 17 (MKLSLLAIAAIAPFVSA) is a signal peptide. Residues histidine 18 and histidine 101 each coordinate Cu(2+). Residues cysteine 67 and cysteine 189 are joined by a disulfide bond. Histidine 176 lines the O2 pocket. Tyrosine 186 lines the Cu(2+) pocket. Asparagine 220 carries N-linked (GlcNAc...) asparagine glycosylation.

Belongs to the polysaccharide monooxygenase AA9 family. Cu(2+) is required as a cofactor.

The protein resides in the secreted. It catalyses the reaction [(1-&gt;4)-beta-D-glucosyl]n+m + reduced acceptor + O2 = 4-dehydro-beta-D-glucosyl-[(1-&gt;4)-beta-D-glucosyl]n-1 + [(1-&gt;4)-beta-D-glucosyl]m + acceptor + H2O.. Functionally, lytic polysaccharide monooxygenase (LPMO) that depolymerizes crystalline and amorphous polysaccharides via the oxidation of scissile alpha- or beta-(1-4)-glycosidic bonds, yielding C1 or C4 oxidation products. Catalysis by LPMOs requires the reduction of the active-site copper from Cu(II) to Cu(I) by a reducing agent and H(2)O(2) or O(2) as a cosubstrate. This is AA9 family lytic polysaccharide monooxygenase D from Aspergillus tamarii.